We begin with the raw amino-acid sequence, 359 residues long: Glutamate 5-kinase (359 aa).

An ATP-binding site is contributed by Lys7. Positions 47, 135, and 147 each coordinate substrate. 202-208 (SGGITSK) serves as a coordination point for ATP. The 78-residue stretch at 266-343 (KGSIFINEGA…DQLEDVLGYS (78 aa)) folds into the PUA domain.

This sequence belongs to the glutamate 5-kinase family.

It localises to the cytoplasm. The catalysed reaction is L-glutamate + ATP = L-glutamyl 5-phosphate + ADP. It participates in amino-acid biosynthesis; L-proline biosynthesis; L-glutamate 5-semialdehyde from L-glutamate: step 1/2. In terms of biological role, catalyzes the transfer of a phosphate group to glutamate to form L-glutamate 5-phosphate. In Kosmotoga olearia (strain ATCC BAA-1733 / DSM 21960 / TBF 19.5.1), this protein is Glutamate 5-kinase.